Consider the following 109-residue polypeptide: MEVTAKLRGAAISAQKVRLVADEVRGKSIERALDILAFSNKKGAVFVKKCLESAIANAEHNHGLDIDTLKVSTIYVDEGITLKRILPRAKGRADRISKRTCHITVKVGE.

This sequence belongs to the universal ribosomal protein uL22 family. As to quaternary structure, part of the 50S ribosomal subunit.

This protein binds specifically to 23S rRNA; its binding is stimulated by other ribosomal proteins, e.g. L4, L17, and L20. It is important during the early stages of 50S assembly. It makes multiple contacts with different domains of the 23S rRNA in the assembled 50S subunit and ribosome. Functionally, the globular domain of the protein is located near the polypeptide exit tunnel on the outside of the subunit, while an extended beta-hairpin is found that lines the wall of the exit tunnel in the center of the 70S ribosome. The chain is Large ribosomal subunit protein uL22 from Psychrobacter sp. (strain PRwf-1).